We begin with the raw amino-acid sequence, 105 residues long: Large ribosomal subunit protein uL24 (105 aa).

This sequence belongs to the universal ribosomal protein uL24 family. As to quaternary structure, part of the 50S ribosomal subunit.

In terms of biological role, one of two assembly initiator proteins, it binds directly to the 5'-end of the 23S rRNA, where it nucleates assembly of the 50S subunit. One of the proteins that surrounds the polypeptide exit tunnel on the outside of the subunit. The protein is Large ribosomal subunit protein uL24 of Staphylococcus haemolyticus (strain JCSC1435).